The following is a 307-amino-acid chain: Serine/threonine-protein phosphatase 4 catalytic subunit B (307 aa).

Positions 54, 56, 82, and 114 each coordinate Mn(2+). Catalysis depends on histidine 115, which acts as the Proton donor. Residues histidine 164 and histidine 238 each coordinate Mn(2+). At leucine 307 the chain carries Leucine methyl ester.

This sequence belongs to the PPP phosphatase family. PP-4 (PP-X) subfamily. Serine/threonine-protein phosphatase 4 (PP4) occurs in different assemblies of the catalytic and one or more regulatory subunits. Mn(2+) is required as a cofactor.

The protein localises to the cytoplasm. Its subcellular location is the cytoskeleton. It is found in the microtubule organizing center. It localises to the centrosome. The enzyme catalyses O-phospho-L-seryl-[protein] + H2O = L-seryl-[protein] + phosphate. It catalyses the reaction O-phospho-L-threonyl-[protein] + H2O = L-threonyl-[protein] + phosphate. Functionally, protein phosphatase that regulates many processes such as microtubule organization at centrosomes. The sequence is that of Serine/threonine-protein phosphatase 4 catalytic subunit B (ppp4cb) from Danio rerio (Zebrafish).